The chain runs to 464 residues: uncharacterized protein (464 aa).

One can recognise a TRAM domain in the interval 13–71; that stretch reads MLKVSDIIQIKIDKIVFGGEGLGYYNGFAVFVPMSIPEDELEIEIISIKKTYARGLIKN. Residues Gln-295, Tyr-324, Glu-345, and Asp-393 each coordinate S-adenosyl-L-methionine. Cys-420 (nucleophile) is an active-site residue.

Belongs to the class I-like SAM-binding methyltransferase superfamily. RNA M5U methyltransferase family.

This is an uncharacterized protein from Fusobacterium nucleatum subsp. nucleatum (strain ATCC 25586 / DSM 15643 / BCRC 10681 / CIP 101130 / JCM 8532 / KCTC 2640 / LMG 13131 / VPI 4355).